A 172-amino-acid chain; its full sequence is Disulfide bond formation protein B (172 aa).

Residues 1 to 16 (MNLFASLNQFSKNRIS) lie on the Cytoplasmic side of the membrane. The chain crosses the membrane as a helical span at residues 17-33 (WLLLLLFVVFFEGAALF). At 34-51 (FQHVMMLSPCVMCIYERV) the chain is on the periplasmic side. Residues Cys43 and Cys46 are joined by a disulfide bond. The helical transmembrane segment at 52-67 (AMLGVGGAALFGLIAP) threads the bilayer. The Cytoplasmic segment spans residues 68–74 (NNPLVRW). Residues 75 to 92 (LGLAAWGASAYKGLALSL) form a helical membrane-spanning segment. Topologically, residues 93–147 (QHVDYQFNPSPFATCDLFVTFPDWAPLNQWAPWMFEAYGDCSKIVWQFMTLSMPQ) are periplasmic. An intrachain disulfide couples Cys107 to Cys133. A helical membrane pass occupies residues 148–166 (WLVIIFAGNLVALAFIVIA). Residues 167–172 (QFFKSK) are Cytoplasmic-facing.

The protein belongs to the DsbB family.

It localises to the cell inner membrane. Functionally, required for disulfide bond formation in some periplasmic proteins. Acts by oxidizing the DsbA protein. This is Disulfide bond formation protein B from Vibrio vulnificus (strain CMCP6).